Here is a 216-residue protein sequence, read N- to C-terminus: L-fuculose phosphate aldolase (216 aa).

Residues 28–29 (GN), 43–44 (TG), and 71–72 (SS) each bind substrate. The active-site Proton donor/acceptor is glutamate 73. Residues glutamate 73, histidine 92, histidine 94, and histidine 155 each coordinate Zn(2+).

This sequence belongs to the aldolase class II family. AraD/FucA subfamily. In terms of assembly, homotetramer. Requires Zn(2+) as cofactor.

It catalyses the reaction L-fuculose 1-phosphate = (S)-lactaldehyde + dihydroxyacetone phosphate. It functions in the pathway carbohydrate degradation; L-fucose degradation; L-lactaldehyde and glycerone phosphate from L-fucose: step 3/3. Functionally, involved in the degradation of L-fucose and D-arabinose. Catalyzes the reversible cleavage of L-fuculose 1-phosphate (Fuc1P) to yield dihydroxyacetone phosphate (DHAP) and L-lactaldehyde. This chain is L-fuculose phosphate aldolase, found in Haemophilus influenzae (strain ATCC 51907 / DSM 11121 / KW20 / Rd).